Consider the following 134-residue polypeptide: TSC22 domain family protein 3 (134 aa).

The interval 1–60 (MNTEMYQTPMEVAVYQLHNFSISFFSSLLGGDVVSVKLDNSASGASVVALDNKIEQAMDL) is AP1-binding. The interval 76–97 (LKEQIRELVEKNSQLERENTLL) is leucine-zipper. Positions 101 to 134 (ASPEQLEKFQSRLSPEEPAPEAPETPEAPGGSAV) are disordered. Residue S102 is modified to Phosphoserine. At T125 the chain carries Phosphothreonine. Residues 125 to 134 (TPEAPGGSAV) show a composition bias toward low complexity.

The protein belongs to the TSC-22/Dip/Bun family. In terms of assembly, can form homodimers, however it is likely to function as a monomer. Interacts with NFKB1. Interacts (via N-terminus) with JUN and FOS; these interactions inhibit the binding of active AP1 to its target DNA. Interacts with MYOD1. Interacts with HDAC1; this interaction affects HDAC1 activity on MYOG promoter and thus inhibits MYOD1 transcriptional activity.

Its subcellular location is the cytoplasm. It is found in the nucleus. Functionally, protects T-cells from IL2 deprivation-induced apoptosis through the inhibition of FOXO3A transcriptional activity that leads to the down-regulation of the pro-apoptotic factor BCL2L11. In macrophages, plays a role in the anti-inflammatory and immunosuppressive effects of glucocorticoids and IL10. In T-cells, inhibits anti-CD3-induced NFKB1 nuclear translocation and thereby NFKB1 DNA-binding activities. In vitro, suppresses AP-1 transcription factor complex DNA-binding activities. In Rattus norvegicus (Rat), this protein is TSC22 domain family protein 3 (Tsc22d3).